The sequence spans 206 residues: Ribosomal RNA large subunit methyltransferase E (206 aa).

Positions 61, 63, 81, 97, and 122 each coordinate S-adenosyl-L-methionine. Catalysis depends on Lys-162, which acts as the Proton acceptor.

This sequence belongs to the class I-like SAM-binding methyltransferase superfamily. RNA methyltransferase RlmE family.

It localises to the cytoplasm. The catalysed reaction is uridine(2552) in 23S rRNA + S-adenosyl-L-methionine = 2'-O-methyluridine(2552) in 23S rRNA + S-adenosyl-L-homocysteine + H(+). Functionally, specifically methylates the uridine in position 2552 of 23S rRNA at the 2'-O position of the ribose in the fully assembled 50S ribosomal subunit. This Neisseria gonorrhoeae (strain ATCC 700825 / FA 1090) protein is Ribosomal RNA large subunit methyltransferase E.